Here is a 371-residue protein sequence, read N- to C-terminus: Glutamate 5-kinase (371 aa).

Lys10 contributes to the ATP binding site. Residues Ser50, Asp137, and Asn149 each coordinate substrate. Residues 169-170 and 208-214 contribute to the ATP site; these read SD and TGGMFTK. The PUA domain occupies 274–352; sequence EGRIYIDDGA…EEIRNILGED (79 aa).

It belongs to the glutamate 5-kinase family.

Its subcellular location is the cytoplasm. The enzyme catalyses L-glutamate + ATP = L-glutamyl 5-phosphate + ADP. The protein operates within amino-acid biosynthesis; L-proline biosynthesis; L-glutamate 5-semialdehyde from L-glutamate: step 1/2. In terms of biological role, catalyzes the transfer of a phosphate group to glutamate to form L-glutamate 5-phosphate. The chain is Glutamate 5-kinase from Dictyoglomus turgidum (strain DSM 6724 / Z-1310).